Here is a 328-residue protein sequence, read N- to C-terminus: MNDNAFTFQTLHPETIMDALFEQGIRVDSGLTPLNSYENRVYQFQDEDRRRFVVKFYRPERWSVDQIREEHQFALELVKDEVPVAAPLAFNGQTLLAHQGYHYAIFPSVGGRQFEADNIDQMEAVGRYLGRLHQTGRKRPFTFRPDIGLAEYLFEPRQVFEDAALIPSGQKAAFLKATDTLLSAVTECWRTDFATLRLHGDCHAGNILWRDGPLFVDLDDARNGPAIQDLWMLLNGNKAEQRMQLETIIEAYEEVSEFDTAEIGLIEPLRAMRLVYYLAWLIRRWGDPAFPKNFPWLTGEDYWQRQTTTFIEQTKILHEPPLQLTPMY.

Aspartate 201 (proton acceptor) is an active-site residue. Positions 206 and 217 each coordinate Mg(2+). The active site involves aspartate 217.

Belongs to the SrkA/RdoA protein kinase family. As to quaternary structure, monomer. Requires Mg(2+) as cofactor.

It localises to the cytoplasm. It catalyses the reaction L-seryl-[protein] + ATP = O-phospho-L-seryl-[protein] + ADP + H(+). The catalysed reaction is L-threonyl-[protein] + ATP = O-phospho-L-threonyl-[protein] + ADP + H(+). Functionally, a protein kinase that phosphorylates Ser and Thr residues. Probably acts to suppress the effects of stress linked to accumulation of reactive oxygen species. Probably involved in the extracytoplasmic stress response. In Salmonella paratyphi A (strain ATCC 9150 / SARB42), this protein is Stress response kinase A.